We begin with the raw amino-acid sequence, 532 residues long: Chromobox protein homolog 2 (532 aa).

Residues 1–66 (MEELSSVGEQ…AFQKKEHEKE (66 aa)) are involved in the interaction with H3C15 and H3C1. The region spanning 12-70 (FAAECILSKRLRKGKLEYLVKWRGWSSKHNSWEPEENILDPRLLLAFQKKEHEKEVQNR) is the Chromo domain. Residues 60–69 (KKEHEKEVQN) show a composition bias toward basic and acidic residues. Positions 60 to 204 (KKEHEKEVQN…APASKLPPPL (145 aa)) are disordered. Over residues 70–82 (RKRGKRPRGRPRK) the composition is skewed to basic residues. A DNA-binding region (a.T hook) is located at residues 75-87 (RPRGRPRKLTAMS). Over residues 103-119 (KSKSSSSSSSSTSSSSS) the composition is skewed to low complexity. Residues 128–140 (LDAKRGPRGRETH) are compositionally biased toward basic and acidic residues. Residues lysine 146 and lysine 153 each participate in a glycyl lysine isopeptide (Lys-Gly) (interchain with G-Cter in SUMO2) cross-link. The short motif at 163-168 (KRGRKP) is the Nuclear localization signal element. Arginine 247 carries the post-translational modification Asymmetric dimethylarginine; alternate. An Omega-N-methylarginine; alternate modification is found at arginine 247. Disordered regions lie at residues 296-348 (KGEL…PAPT) and 379-493 (KGVP…SQDW). At serine 302 the chain carries Phosphoserine. The segment covering 464–478 (SSSSDSDPDSASPPS) has biased composition (low complexity). The segment covering 479 to 493 (TGQNPSVSVQTSQDW) has biased composition (polar residues).

In terms of assembly, component of a PRC1-like complex. The composition of the PRC1 complex may differ between the PRC1 complex in pluripotent embryonic stem cells containing RNF2, CBX7 and PCGF2, and the PRC1 complex in differentiating cells containing RNF2, CBX2, CBX4 and BMI1. May interact with H3C15, H3C1 and RNF2. Interacts (via chromodomain) with histone H3K9Me3 and H3K27me3.

The protein localises to the nucleus. The protein resides in the chromosome. Component of a Polycomb group (PcG) multiprotein PRC1-like complex, a complex class required to maintain the transcriptionally repressive state of many genes, including Hox genes, throughout development. PcG PRC1 complex acts via chromatin remodeling and modification of histones; it mediates monoubiquitination of histone H2A 'Lys-119', rendering chromatin heritably changed in its expressibility. Binds to histone H3 trimethylated at 'Lys-9' (H3K9me3) or at 'Lys-27' (H3K27me3). Plays a role in the lineage differentiation of the germ layers in embryonic development. Involved in sexual development, acting as activator of NR5A1 expression. In Homo sapiens (Human), this protein is Chromobox protein homolog 2 (CBX2).